Reading from the N-terminus, the 180-residue chain is Calcineurin subunit B type 1 (180 aa).

Gly2 is lipidated: N-myristoyl glycine. EF-hand domains lie at 25–60 (AELKKLYRRFQMLDKDGSGTLTTDEFLSIPDLALNP), 62–92 (LERVIQIFDQNKDNEIEFFEFVGTLATLSHK), 94–129 (TKEDKLKFLFQIYDIDCDGFISNGELFQVLKMMVGT), and 135–170 (QLQQIVDKTIIEGDYDKDGKISFDEFIHMIGNQEGI). Residues Asp38, Asp40, Ser42, Thr44, Glu49, Asp70, Asn72, Asp74, Glu76, Glu81, Asp107, Asp109, Asp111, and Glu118 each contribute to the Ca(2+) site. The canA/calcineurin A binding stretch occupies residues 138-143 (QIVDKT). 5 residues coordinate Ca(2+): Asp148, Asp150, Asp152, Lys154, and Glu159.

This sequence belongs to the calcineurin regulatory subunit family. Forms a complex composed of a calmodulin-dependent catalytic subunit canA (also known as calcineurin A) and a regulatory Ca(2+)-binding subunit cnbA (also known as calcineurin B).

Its function is as follows. Regulatory subunit of calcineurin, a calcium-dependent, calmodulin stimulated protein phosphatase. Confers calcium sensitivity. Important for stalk formation. The polypeptide is Calcineurin subunit B type 1 (cnbA) (Dictyostelium discoideum (Social amoeba)).